Consider the following 190-residue polypeptide: Protein FAM210B, mitochondrial (190 aa).

The N-terminal 58 residues, M1–C58, are a transit peptide targeting the mitochondrion. Basic and acidic residues predominate over residues G56–R66. The disordered stretch occupies residues G56–L81. In terms of domain architecture, DUF1279 spans E78 to K189. A run of 2 helical transmembrane segments spans residues V97 to V117 and F148 to V168.

It belongs to the FAM210 family. In terms of tissue distribution, expressed in late erythroblast differentiation stages.

The protein resides in the mitochondrion. It is found in the mitochondrion outer membrane. Plays a role in erythroid differentiation. Involved in cell proliferation and tumor cell growth suppression. Involved in the metabolic reprogramming of cancer cells in a PDK4-dependent manner. The polypeptide is Protein FAM210B, mitochondrial (Mus musculus (Mouse)).